A 315-amino-acid chain; its full sequence is MPDMKLFAGNATPELAQRIANRLYTSLGDAAVGRFSDGEVSVQINENVRGGDIFIIQSTCAPTNDNLMELVVMVDALRRASAGRITAVIPYFGYARQDRRVRSARVPITAKVVADFLSSVGVDRVLTVDLHAEQIQGFFDVPVDNVFGSPILLEDMLQLNLDNPIVVSPDIGGVVRARAIAKLLNDTDMAIIDKRRPRANVSQVMHIIGDVAGRDCVLVDDMIDTGGTLCKAAEALKERGAKRVFAYATHPIFSGNAANNLRNSVIDEVVVCDTIPLSDEIKSLPNVRTLTLSGMLAEAIRRISNEESISAMFEH.

ATP is bound by residues 37–39 (DGE) and 96–97 (RQ). His-131 and Asp-170 together coordinate Mg(2+). Lys-194 is an active-site residue. Residues Arg-196, Asp-220, and 224-228 (DTGGT) each bind D-ribose 5-phosphate.

It belongs to the ribose-phosphate pyrophosphokinase family. Class I subfamily. In terms of assembly, homohexamer. Mg(2+) is required as a cofactor.

Its subcellular location is the cytoplasm. The catalysed reaction is D-ribose 5-phosphate + ATP = 5-phospho-alpha-D-ribose 1-diphosphate + AMP + H(+). Its pathway is metabolic intermediate biosynthesis; 5-phospho-alpha-D-ribose 1-diphosphate biosynthesis; 5-phospho-alpha-D-ribose 1-diphosphate from D-ribose 5-phosphate (route I): step 1/1. In terms of biological role, involved in the biosynthesis of the central metabolite phospho-alpha-D-ribosyl-1-pyrophosphate (PRPP) via the transfer of pyrophosphoryl group from ATP to 1-hydroxyl of ribose-5-phosphate (Rib-5-P). This is Ribose-phosphate pyrophosphokinase from Escherichia coli O6:H1 (strain CFT073 / ATCC 700928 / UPEC).